Consider the following 252-residue polypeptide: 3-deoxy-manno-octulosonate cytidylyltransferase (252 aa).

This sequence belongs to the KdsB family.

The protein localises to the cytoplasm. The catalysed reaction is 3-deoxy-alpha-D-manno-oct-2-ulosonate + CTP = CMP-3-deoxy-beta-D-manno-octulosonate + diphosphate. Its pathway is nucleotide-sugar biosynthesis; CMP-3-deoxy-D-manno-octulosonate biosynthesis; CMP-3-deoxy-D-manno-octulosonate from 3-deoxy-D-manno-octulosonate and CTP: step 1/1. It functions in the pathway bacterial outer membrane biogenesis; lipopolysaccharide biosynthesis. Functionally, activates KDO (a required 8-carbon sugar) for incorporation into bacterial lipopolysaccharide in Gram-negative bacteria. In Nitratidesulfovibrio vulgaris (strain DP4) (Desulfovibrio vulgaris), this protein is 3-deoxy-manno-octulosonate cytidylyltransferase.